The chain runs to 336 residues: MTVRIGVVGTGAIGRDHARRINKVLGGAKIVALSDVNRASAEAVKNDIAPDAVLFATGEELIASPDVEAVLVTSWGATHEQYVLAAIAAGKPCFCEKPLATTAEGARRIVDAEVAHGKRLVQVGFMRRYDAGYVALKQAVDNRIGAPIMVHAAHRNPSVPEQYVTPMAIHDTMIHEIDVLRWLLDDDYVSARVLFPRSAARSHAKLKDPQIVILETAKGTIIDVEIFVNCHYGYDIQCQVVGEDGIASLPEPMSVQTRLGARLQNDILTDWKDRFIASYDVELQDFIHAAAKGTASGPNSWDGYVAAISSDACVAAQETQGAAVAIDLPARPALYQ.

Belongs to the Gfo/Idh/MocA family. Homotetramer.

It carries out the reaction myo-inositol + NAD(+) = scyllo-inosose + NADH + H(+). Functionally, involved in the oxidation of myo-inositol (MI) to 2-keto-myo-inositol (2KMI or 2-inosose). This is Inositol 2-dehydrogenase from Agrobacterium fabrum (strain C58 / ATCC 33970) (Agrobacterium tumefaciens (strain C58)).